A 486-amino-acid chain; its full sequence is 6-phosphogluconate dehydrogenase, decarboxylating 2 (486 aa).

NADP(+)-binding positions include 12 to 17, 35 to 37, 79 to 81, and N107; these read GLAVMG, NRT, and VKA. Substrate is bound by residues N107 and 133–135; that span reads SGG. The Proton acceptor role is filled by K188. Residue 191–192 participates in substrate binding; it reads HN. The active-site Proton donor is the E195. Substrate is bound by residues Y196, K266, R293, R456, and H462. Positions 484–486 match the Microbody targeting signal motif; sequence SKI.

Belongs to the 6-phosphogluconate dehydrogenase family. Forms homodimer. Forms heterodimers with PGD1 or PGD3.

The protein localises to the cytoplasm. It localises to the cytosol. The protein resides in the peroxisome. The catalysed reaction is 6-phospho-D-gluconate + NADP(+) = D-ribulose 5-phosphate + CO2 + NADPH. Its pathway is carbohydrate degradation; pentose phosphate pathway; D-ribulose 5-phosphate from D-glucose 6-phosphate (oxidative stage): step 3/3. In terms of biological role, catalyzes the oxidative decarboxylation of 6-phosphogluconate to ribulose 5-phosphate and CO(2), with concomitant reduction of NADP to NADPH. Required for guided growth of the male gametophytes and interaction between the pollen tube and the ovule. In Arabidopsis thaliana (Mouse-ear cress), this protein is 6-phosphogluconate dehydrogenase, decarboxylating 2.